A 180-amino-acid chain; its full sequence is tRNA (cytidine(56)-2'-O)-methyltransferase (180 aa).

S-adenosyl-L-methionine contacts are provided by residues L85, 114–118 (GAEKV), and 132–139 (VGNQPHSE).

It belongs to the aTrm56 family. Homodimer.

It is found in the cytoplasm. It carries out the reaction cytidine(56) in tRNA + S-adenosyl-L-methionine = 2'-O-methylcytidine(56) in tRNA + S-adenosyl-L-homocysteine + H(+). Specifically catalyzes the AdoMet-dependent 2'-O-ribose methylation of cytidine at position 56 in tRNAs. The protein is tRNA (cytidine(56)-2'-O)-methyltransferase of Thermococcus kodakarensis (strain ATCC BAA-918 / JCM 12380 / KOD1) (Pyrococcus kodakaraensis (strain KOD1)).